The sequence spans 367 residues: Avirulence protein ATR5 (367 aa).

The signal sequence occupies residues 1-16 (MRLISPALVVSTAIQA). The N-linked (GlcNAc...) asparagine glycan is linked to asparagine 20. The disordered stretch occupies residues 33 to 65 (NPLASAHPPDVGYDGVPAGRVRNPDDPTTEERT). Residues 54–65 (RNPDDPTTEERT) show a composition bias toward basic and acidic residues. The short motif at 61–64 (TEER) is the dEER element.

The protein belongs to the RxLR effector family.

The protein localises to the secreted. Its subcellular location is the host cell. Secreted effector that acts as an elicitor of hypersensitive response (HR) specifically on plants carrying defense protein RPP5. This is Avirulence protein ATR5 from Hyaloperonospora arabidopsidis (strain Emoy2) (Downy mildew agent).